Here is a 150-residue protein sequence, read N- to C-terminus: Large ribosomal subunit protein bL9 (150 aa).

It belongs to the bacterial ribosomal protein bL9 family.

Its function is as follows. Binds to the 23S rRNA. The sequence is that of Large ribosomal subunit protein bL9 from Clavibacter sepedonicus (Clavibacter michiganensis subsp. sepedonicus).